The following is a 325-amino-acid chain: Ribose-phosphate pyrophosphokinase 2 (325 aa).

Residue 96–101 (RQDKKD) coordinates ATP. Residues D135, H137, D146, and D150 each contribute to the Mg(2+) site. H137 is an ATP binding site. A binding of phosphoribosylpyrophosphate region spans residues 219–234 (KDRVAILVDDMADTCG).

Belongs to the ribose-phosphate pyrophosphokinase family. In terms of assembly, homodimer. The active form is probably a hexamer composed of 3 homodimers. Mg(2+) serves as cofactor.

It catalyses the reaction D-ribose 5-phosphate + ATP = 5-phospho-alpha-D-ribose 1-diphosphate + AMP + H(+). It functions in the pathway metabolic intermediate biosynthesis; 5-phospho-alpha-D-ribose 1-diphosphate biosynthesis; 5-phospho-alpha-D-ribose 1-diphosphate from D-ribose 5-phosphate (route I): step 1/1. Activated by magnesium and inorganic phosphate. Competitively or non-competitively inhibited by ADP, 2,3-bisphosphoglyceride or GDP. In terms of biological role, catalyzes the synthesis of phosphoribosylpyrophosphate (PRPP) that is essential for nucleotide synthesis. This is Ribose-phosphate pyrophosphokinase 2 (PRPS2) from Gallus gallus (Chicken).